The following is a 941-amino-acid chain: Probable respiratory burst oxidase homolog protein I (941 aa).

At Met-1–Arg-374 the chain is on the cytoplasmic side. 2 disordered regions span residues Pro-29–Glu-48 and Glu-103–Glu-166. A compositionally biased stretch (low complexity) spans Ser-36 to Ser-45. Residues Glu-103–Lys-117 are compositionally biased toward polar residues. EF-hand-like regions lie at residues Ser-196 to Ser-204 and Arg-232 to Glu-243. An EF-hand domain is found at Glu-254–Ala-289. Residues Asn-269, Asp-271, Arg-273, and Glu-278 each contribute to the Ca(2+) site. Residues Ser-346 and Ser-350 each carry the phosphoserine modification. A helical membrane pass occupies residues Ile-375–Gln-395. Topologically, residues Tyr-396–Tyr-407 are extracellular. A helical transmembrane segment spans residues Cys-408–Leu-428. The region spanning Lys-413–Val-570 is the Ferric oxidoreductase domain. Topologically, residues Pro-429–Gly-514 are cytoplasmic. A helical membrane pass occupies residues Ile-515–Cys-535. Residues Arg-536 to Tyr-557 are Extracellular-facing. A helical membrane pass occupies residues Ser-558 to Leu-578. Topologically, residues Glu-579–Thr-586 are cytoplasmic. A helical membrane pass occupies residues Val-587 to Phe-604. Residues Arg-605 to Trp-731 lie on the Extracellular side of the membrane. The 121-residue stretch at Ser-609–Asp-729 folds into the FAD-binding FR-type domain. A helical membrane pass occupies residues Lys-732–Leu-752. The Cytoplasmic segment spans residues Arg-753 to Phe-941.

The protein belongs to the RBOH (TC 5.B.1.3) family. As to quaternary structure, monomer and homodimer.

The protein localises to the membrane. In terms of biological role, calcium-dependent NADPH oxidase that generates superoxide. This is Probable respiratory burst oxidase homolog protein I (RBOHI) from Arabidopsis thaliana (Mouse-ear cress).